A 286-amino-acid chain; its full sequence is Uridylate cyclase (286 aa).

In terms of domain architecture, Guanylate cyclase spans 90-223 (TAIFVDIRKS…DAVTKAANMS (134 aa)). Phe-93 lines the a ribonucleoside 5'-triphosphate pocket. Mn(2+) contacts are provided by Asp-95, Ile-96, and Asp-140.

This sequence belongs to the adenylyl cyclase class-4/guanylyl cyclase family. Pyrimidine cyclase subfamily. Homodimer. The cofactor is Mn(2+).

The protein resides in the cytoplasm. It carries out the reaction UTP = 3',5'-cyclic UMP + diphosphate. Functionally, pycsar (pyrimidine cyclase system for antiphage resistance) provides immunity against bacteriophage. The pyrimidine cyclase (PycC) synthesizes cyclic nucleotides in response to infection; these serve as specific second messenger signals. The signals activate the adjacent effector, leading to bacterial cell death and abortive phage infection. A clade C Pycsar system. In terms of biological role, the pyrimidine cyclase gene of a two-gene Pycsar system, weakly generates cyclic UMP (cUMP) from UTP, has little to no activity on ATP, CTP or GTP. Expression of this and adjacent effector TpPycTM (AC A0A1T4LJG1) probably confers resistance to bacteriophage. The genes are probably only expressed in response to bacteriophage infection. The polypeptide is Uridylate cyclase (Treponema porcinum).